Consider the following 538-residue polypeptide: Cytochrome P450 monooxygenase astC (538 aa).

Residues 18 to 38 form a helical membrane-spanning segment; the sequence is ALMLPALVGCALLIYRAFFAI. C481 contacts heme.

This sequence belongs to the cytochrome P450 family. Requires heme as cofactor.

The protein resides in the membrane. The protein operates within secondary metabolite biosynthesis; terpenoid biosynthesis. In terms of biological role, cytochrome P450 monooxygenase; part of the gene cluster that mediates the biosynthesis of the sesquiterpenoid aspterric acid (AA), an inhibitor of dihydroxy-acid dehydratase (DHAD) effective as an herbicide. AstC catalyzes the third and last step within the pathway and converts the alpha-epoxy carboxylate intermediate produced by the cytochrome P450 monooxygenase astC from (-)daucane into the tricyclic aspterric acid. The chain is Cytochrome P450 monooxygenase astC from Aspergillus terreus (strain NIH 2624 / FGSC A1156).